The following is an 803-amino-acid chain: Nuclear factor of activated T-cells, cytoplasmic 1 (803 aa).

Residues 101–106 (PRIEIT) form a calcineurin-binding region. The interval 109 to 199 (LGLHHNSSQF…CVSPKTTDPE (91 aa)) is transactivation domain A (TAD-A). Residues 181-195 (PQTSPWQSPCVSPKT) are compositionally biased toward polar residues. Residues 181-279 (PQTSPWQSPC…GSPRVSVTDD (99 aa)) are disordered. Tandem repeats lie at residues 184–200 (SPWQ…DPEE) and 214–230 (SPRH…VTEE). The tract at residues 184–279 (SPWQSPCVSP…GSPRVSVTDD (96 aa)) is 3 X SP repeats. Serine 214 and serine 218 each carry phosphoserine. Over residues 214–231 (SPRHSPSTSPRTSVTEES) the composition is skewed to low complexity. A Phosphoserine; by PKA modification is found at serine 226. Residues 246 to 248 (KRK) carry the Nuclear localization signal motif. Repeat 3 spans residues 263–279 (SPTPSPQGSPRVSVTDD). Position 275 is a phosphoserine; by PKA (serine 275). Residues 291-302 (SAIVAAINALST) carry the Nuclear export signal motif. The region spanning 389-571 (PSLPALDWQL…NPIECSQRSA (183 aa)) is the RHD domain. The DNA-binding element occupies 418-425 (RAHYETEG). Residues 661 to 663 (KRK) carry the Nuclear localization signal motif. Residues 723-803 (LMPGFPPRPQ…QPQVSPTSSG (81 aa)) form a disordered region. The segment covering 778-792 (SGVPPGPPQPPPPTL) has biased composition (pro residues). Over residues 793–803 (LQPQVSPTSSG) the composition is skewed to low complexity.

In terms of assembly, member of the multicomponent NFATC transcription complex that consists of at least two components, a pre-existing cytoplasmic component NFATC2 and an inducible nuclear component NFATC1. Other members such as NFATC4, NFATC3 or members of the activating protein-1 family, MAF, GATA4 and Cbp/p300 can also bind the complex. NFATC proteins bind to DNA as monomers. Interacts with HOMER2 and HOMER3; this interaction may compete with calcineurin/PPP3CA-binding and hence prevent NFATC1 dephosphorylation and activation. Interacts with TLE6/GRG6. In terms of processing, phosphorylated by NFATC-kinase and GSK3B; phosphorylation induces NFATC1 nuclear exit and dephosphorylation by calcineurin promotes nuclear import. Phosphorylation by PKA and DYRK2 negatively modulates nuclear accumulation, and promotes subsequent phosphorylation by GSK3B or casein kinase 1.

It localises to the cytoplasm. The protein resides in the nucleus. Plays a role in the inducible expression of cytokine genes in T-cells, especially in the induction of the IL-2 or IL-4 gene transcription. Also controls gene expression in embryonic cardiac cells. Could regulate not only the activation and proliferation but also the differentiation and programmed death of T-lymphocytes as well as lymphoid and non-lymphoid cells. Required for osteoclastogenesis and regulates many genes important for osteoclast differentiation and function. The protein is Nuclear factor of activated T-cells, cytoplasmic 1 of Bos taurus (Bovine).